The following is a 319-amino-acid chain: L-lactate dehydrogenase 2 (319 aa).

Residues valine 16, aspartate 37, lysine 42, tyrosine 68, and 82-83 (GA) contribute to the NAD(+) site. Positions 85 and 91 each coordinate substrate. NAD(+)-binding positions include serine 104, 121-123 (AAN), and serine 146. 123 to 126 (NPVD) provides a ligand contact to substrate. 151-154 (DSAR) contacts substrate. Histidine 178 (proton acceptor) is an active-site residue. Residue tyrosine 222 is modified to Phosphotyrosine. Threonine 231 is a substrate binding site.

This sequence belongs to the LDH/MDH superfamily. LDH family. In terms of assembly, homotetramer.

The protein localises to the cytoplasm. It catalyses the reaction (S)-lactate + NAD(+) = pyruvate + NADH + H(+). It participates in fermentation; pyruvate fermentation to lactate; (S)-lactate from pyruvate: step 1/1. Its function is as follows. Catalyzes the conversion of lactate to pyruvate (Potential). Contributes to S.aureus growth during nitrosative stress in both aerobically and anaerobically cultured cells, despite playing a secondary role in this resistance mechanism. The polypeptide is L-lactate dehydrogenase 2 (Staphylococcus aureus (strain USA300)).